Here is a 132-residue protein sequence, read N- to C-terminus: MGRDTIADIITSIRNADMGTKGMVRIASTNITENIVKILLREGFIENVRKHRESNKYFLVSTLRHRRNRKGTYRNILKRISRPGLRIYSNYQGIPRILGGMGVVILSTSRGIMTDREARLEGIGGEILCYIW.

This sequence belongs to the universal ribosomal protein uS8 family. In terms of assembly, part of the 30S ribosomal subunit.

Its subcellular location is the plastid. It localises to the chloroplast. Its function is as follows. One of the primary rRNA binding proteins, it binds directly to 16S rRNA central domain where it helps coordinate assembly of the platform of the 30S subunit. The chain is Small ribosomal subunit protein uS8c (rps8) from Illicium oligandrum (Star anise).